Here is a 457-residue protein sequence, read N- to C-terminus: tRNA-2-methylthio-N(6)-dimethylallyladenosine synthase (457 aa).

One can recognise an MTTase N-terminal domain in the interval 3–120; the sequence is KKVYVKTFGC…LPQMIDARRA (118 aa). [4Fe-4S] cluster is bound by residues C12, C49, C83, C157, C161, and C164. The 235-residue stretch at 143–377 folds into the Radical SAM core domain; it reads RVEGPSAFVS…QATIEENVAR (235 aa). The TRAM domain occupies 380–447; the sequence is QSMVGKVERI…PHSLRGELVI (68 aa).

The protein belongs to the methylthiotransferase family. MiaB subfamily. In terms of assembly, monomer. Requires [4Fe-4S] cluster as cofactor.

The protein resides in the cytoplasm. It carries out the reaction N(6)-dimethylallyladenosine(37) in tRNA + (sulfur carrier)-SH + AH2 + 2 S-adenosyl-L-methionine = 2-methylsulfanyl-N(6)-dimethylallyladenosine(37) in tRNA + (sulfur carrier)-H + 5'-deoxyadenosine + L-methionine + A + S-adenosyl-L-homocysteine + 2 H(+). Functionally, catalyzes the methylthiolation of N6-(dimethylallyl)adenosine (i(6)A), leading to the formation of 2-methylthio-N6-(dimethylallyl)adenosine (ms(2)i(6)A) at position 37 in tRNAs that read codons beginning with uridine. This chain is tRNA-2-methylthio-N(6)-dimethylallyladenosine synthase, found in Burkholderia cenocepacia (strain ATCC BAA-245 / DSM 16553 / LMG 16656 / NCTC 13227 / J2315 / CF5610) (Burkholderia cepacia (strain J2315)).